A 1262-amino-acid chain; its full sequence is Nucleoporin NUP120 (1262 aa).

3 disordered regions span residues 36–58 (YGRS…DDEK), 770–791 (VSPS…GQDE), and 1128–1196 (DVPP…EDQQ). Residues 770–786 (VSPSKSRSGSSSPTLSK) are compositionally biased toward low complexity. The span at 1165–1185 (DSRIEELARLLDSESAGDKKA) shows a compositional bias: basic and acidic residues.

Component of the nuclear pore complex (NPC). The nuclear pore complex (NPC) constitutes the exclusive means of nucleocytoplasmic transport. NPCs allow the passive diffusion of ions and small molecules and the active, nuclear transport receptor-mediated bidirectional transport of macromolecules such as proteins, RNAs, ribonucleoparticles (RNPs), and ribosomal subunits across the nuclear envelope. Due to its 8-fold rotational symmetry, all subunits are present with 8 copies or multiples thereof.

The protein resides in the nucleus. It is found in the nuclear pore complex. The protein localises to the nucleus membrane. Functionally, functions as a component of the nuclear pore complex (NPC). NPC components, collectively referred to as nucleoporins (NUPs), can play the role of both NPC structural components and of docking or interaction partners for transiently associated nuclear transport factors. NUP120 is involved in nuclear poly(A)+ RNA and pre-ribosome export, in GSP1 nuclear import, in NPC assembly and distribution, as well as in nuclear envelope organization. The sequence is that of Nucleoporin NUP120 (NUP120) from Chaetomium thermophilum (strain DSM 1495 / CBS 144.50 / IMI 039719) (Thermochaetoides thermophila).